We begin with the raw amino-acid sequence, 659 residues long: Endoglucanase A (659 aa).

The interval 1-500 (MLIFETYLIL…SKLPNFPPKE (500 aa)) is catalytic. Asp101 functions as the Nucleophile in the catalytic mechanism. The disordered stretch occupies residues 413-433 (NSPKHPHHRTAHGSWSNQLTN). Residues His419, Asp457, and Glu466 contribute to the active site. A CBM3 domain is found at 501–658 (QVEDEFFVEA…GVLVFGTLPD (158 aa)).

Belongs to the glycosyl hydrolase 9 (cellulase E) family.

The protein resides in the secreted. It carries out the reaction Endohydrolysis of (1-&gt;4)-beta-D-glucosidic linkages in cellulose, lichenin and cereal beta-D-glucans.. Its activity is regulated as follows. Strongly inhibited by ZnCl(2) and by EDTA. In terms of biological role, active on carboxymethyl cellulose and carboxymethyl cellulose-RBB but not avicel, xanthan gum, carboxymethyl-curdulan-RBB or carboxymethyl-xylan-RBB. The chain is Endoglucanase A (eglA) from Bacillus pumilus (Bacillus mesentericus).